Consider the following 216-residue polypeptide: Transmembrane emp24 domain-containing protein eca (216 aa).

The N-terminal stretch at 1–20 (MRNQFICVALLLCALNSACG) is a signal peptide. At 21–183 (LYFHISETER…RHTSESTNSR (163 aa)) the chain is on the lumenal side. The GOLD domain occupies 30–126 (RKCFIEEVPD…QLRVHLDIQV (97 aa)). Positions 134–164 (ANVAQKEKLTELQLRIRQLLDQVDQITKEQN) form a coiled coil. A helical transmembrane segment spans residues 184–203 (VLWWSLAQTVVLVCMGFWQM). At 204–216 (RHLKSFFEAKKLV) the chain is on the cytoplasmic side. The Prevents secretion from ER motif lies at 213–216 (KKLV).

It belongs to the EMP24/GP25L family.

The protein localises to the endoplasmic reticulum membrane. Functionally, eca and bai are essential, though not redundant, for dorsoventral patterning of the embryo. Specifically required during early embryogenesis for the activity of maternal tkv, while the zygotic tkv is not affected. Involved in Golgi organization. The sequence is that of Transmembrane emp24 domain-containing protein eca from Drosophila willistoni (Fruit fly).